Reading from the N-terminus, the 111-residue chain is Large ribosomal subunit protein uL22 (111 aa).

This sequence belongs to the universal ribosomal protein uL22 family. In terms of assembly, part of the 50S ribosomal subunit.

Functionally, this protein binds specifically to 23S rRNA; its binding is stimulated by other ribosomal proteins, e.g. L4, L17, and L20. It is important during the early stages of 50S assembly. It makes multiple contacts with different domains of the 23S rRNA in the assembled 50S subunit and ribosome. Its function is as follows. The globular domain of the protein is located near the polypeptide exit tunnel on the outside of the subunit, while an extended beta-hairpin is found that lines the wall of the exit tunnel in the center of the 70S ribosome. The protein is Large ribosomal subunit protein uL22 of Francisella philomiragia subsp. philomiragia (strain ATCC 25017 / CCUG 19701 / FSC 153 / O#319-036).